The following is a 244-amino-acid chain: 7-cyano-7-deazaguanine synthase (244 aa).

An ATP-binding site is contributed by 19–29 (FSGGQDSTTCL). Zn(2+) contacts are provided by Cys207, Cys222, Cys225, and Cys228.

The protein belongs to the QueC family. Zn(2+) is required as a cofactor.

The enzyme catalyses 7-carboxy-7-deazaguanine + NH4(+) + ATP = 7-cyano-7-deazaguanine + ADP + phosphate + H2O + H(+). Its pathway is purine metabolism; 7-cyano-7-deazaguanine biosynthesis. Its function is as follows. Catalyzes the ATP-dependent conversion of 7-carboxy-7-deazaguanine (CDG) to 7-cyano-7-deazaguanine (preQ(0)). This chain is 7-cyano-7-deazaguanine synthase, found in Bordetella avium (strain 197N).